Here is a 304-residue protein sequence, read N- to C-terminus: GTPase Era (304 aa).

The 169-residue stretch at histidine 9–glutamate 177 folds into the Era-type G domain. The tract at residues glycine 17 to serine 24 is G1. Glycine 17–serine 24 is a GTP binding site. The segment at glutamine 43 to asparagine 47 is G2. The interval aspartate 64–glycine 67 is G3. Residues aspartate 64–isoleucine 68 and asparagine 127–aspartate 130 contribute to the GTP site. Positions asparagine 127 to aspartate 130 are G4. Positions isoleucine 156–alanine 158 are G5. In terms of domain architecture, KH type-2 spans threonine 208–glutamate 285.

The protein belongs to the TRAFAC class TrmE-Era-EngA-EngB-Septin-like GTPase superfamily. Era GTPase family. As to quaternary structure, monomer.

The protein localises to the cytoplasm. It localises to the cell membrane. Its function is as follows. An essential GTPase that binds both GDP and GTP, with rapid nucleotide exchange. Plays a role in 16S rRNA processing and 30S ribosomal subunit biogenesis and possibly also in cell cycle regulation and energy metabolism. This is GTPase Era from Pediococcus pentosaceus (strain ATCC 25745 / CCUG 21536 / LMG 10740 / 183-1w).